A 564-amino-acid polypeptide reads, in one-letter code: Cysteine--tRNA ligase CPS1, chloroplastic/mitochondrial (564 aa).

Residues Met1–Leu43 constitute a chloroplast and mitochondrion transit peptide. Cys93 contributes to the Zn(2+) binding site. A 'HIGH' region motif is present at residues Val95–His105. Residues Cys273, His298, and Glu302 each contribute to the Zn(2+) site. The 'KMSKS' region motif lies at Lys330–Ser334. Lys333 lines the ATP pocket.

It belongs to the class-I aminoacyl-tRNA synthetase family. Zn(2+) serves as cofactor.

It is found in the plastid. It localises to the chloroplast. Its subcellular location is the mitochondrion. It catalyses the reaction tRNA(Cys) + L-cysteine + ATP = L-cysteinyl-tRNA(Cys) + AMP + diphosphate. Functionally, nuclear genome-encoded factor required for normal assembly of chloroplast polysomes. The protein is Cysteine--tRNA ligase CPS1, chloroplastic/mitochondrial of Zea mays (Maize).